A 284-amino-acid chain; its full sequence is Tropomyosin (284 aa).

Residues 1–284 (MDGIKKKMIA…DQTFAELTGY (284 aa)) are a coiled coil. Residues 111–131 (TKLEEASKTAEESERGRKDLE) are disordered.

This sequence belongs to the tropomyosin family. Homodimer.

Tropomyosin, in association with the troponin complex, plays a central role in the calcium dependent regulation of muscle contraction. In Schistosoma japonicum (Blood fluke), this protein is Tropomyosin.